A 189-amino-acid chain; its full sequence is Peptidyl-tRNA hydrolase (189 aa).

Tyr-15 provides a ligand contact to tRNA. Catalysis depends on His-20, which acts as the Proton acceptor. The tRNA site is built by Phe-66, Asn-68, and Asn-114.

The protein belongs to the PTH family. In terms of assembly, monomer.

It is found in the cytoplasm. The enzyme catalyses an N-acyl-L-alpha-aminoacyl-tRNA + H2O = an N-acyl-L-amino acid + a tRNA + H(+). Hydrolyzes ribosome-free peptidyl-tRNAs (with 1 or more amino acids incorporated), which drop off the ribosome during protein synthesis, or as a result of ribosome stalling. Functionally, catalyzes the release of premature peptidyl moieties from peptidyl-tRNA molecules trapped in stalled 50S ribosomal subunits, and thus maintains levels of free tRNAs and 50S ribosomes. The sequence is that of Peptidyl-tRNA hydrolase from Streptococcus gordonii (strain Challis / ATCC 35105 / BCRC 15272 / CH1 / DL1 / V288).